Here is a 150-residue protein sequence, read N- to C-terminus: SPbeta prophage-derived uncharacterized protein YoqH (150 aa).

An N-terminal signal peptide occupies residues 1-23 (MKRFILVLSFLSIIVAYPIQTNA).

The polypeptide is SPbeta prophage-derived uncharacterized protein YoqH (yoqH) (Bacillus subtilis (strain 168)).